The sequence spans 516 residues: Arabinose import ATP-binding protein AraG (516 aa).

2 ABC transporter domains span residues 5–240 and 240–497; these read LRFD…MVGR and REIS…LPQS. Position 37–44 (37–44) interacts with ATP; the sequence is GENGAGKS.

Belongs to the ABC transporter superfamily. Arabinose importer (TC 3.A.1.2.2) family. As to quaternary structure, the complex is composed of two ATP-binding proteins (AraG), two transmembrane proteins (AraH) and a solute-binding protein (AraF).

The protein localises to the cell inner membrane. The enzyme catalyses L-arabinose(out) + ATP + H2O = L-arabinose(in) + ADP + phosphate + H(+). Part of the ABC transporter complex AraFGH involved in arabinose import. Responsible for energy coupling to the transport system. In Paraburkholderia xenovorans (strain LB400), this protein is Arabinose import ATP-binding protein AraG.